The sequence spans 495 residues: Glycerol kinase (495 aa).

Thr11 lines the ADP pocket. Positions 11, 12, and 13 each coordinate ATP. Thr11 provides a ligand contact to sn-glycerol 3-phosphate. Arg15 contributes to the ADP binding site. The sn-glycerol 3-phosphate site is built by Arg81, Glu82, Tyr133, and Asp242. Glycerol contacts are provided by Arg81, Glu82, Tyr133, Asp242, and Gln243. ADP is bound by residues Thr264 and Gly307. 4 residues coordinate ATP: Thr264, Gly307, Gln311, and Gly408. The ADP site is built by Gly408 and Asn412.

It belongs to the FGGY kinase family.

It catalyses the reaction glycerol + ATP = sn-glycerol 3-phosphate + ADP + H(+). It participates in polyol metabolism; glycerol degradation via glycerol kinase pathway; sn-glycerol 3-phosphate from glycerol: step 1/1. With respect to regulation, inhibited by fructose 1,6-bisphosphate (FBP). Functionally, key enzyme in the regulation of glycerol uptake and metabolism. Catalyzes the phosphorylation of glycerol to yield sn-glycerol 3-phosphate. This Alkalilimnicola ehrlichii (strain ATCC BAA-1101 / DSM 17681 / MLHE-1) protein is Glycerol kinase.